A 444-amino-acid polypeptide reads, in one-letter code: L-ornithine N(5)-monooxygenase (444 aa).

Residues 40–48 and Q59 contribute to the FAD site; that span reads ERQPAFGWH. K64 serves as a coordination point for substrate. V125 is a binding site for FAD. Residues 211–214 and R236 contribute to the NADP(+) site; that span reads AGQS. Substrate is bound by residues 250 to 253 and N280; that span reads NEIF. 280–282 is an NADP(+) binding site; it reads NYA. An FAD-binding site is contributed by 408-410; that stretch reads RCC. Positions 420 to 432 are enriched in basic residues; that stretch reads SARRSKTGSRPRT. The segment at 420–444 is disordered; that stretch reads SARRSKTGSRPRTMKAWPGPRTKND.

Belongs to the lysine N(6)-hydroxylase/L-ornithine N(5)-oxygenase family. The cofactor is FAD.

The catalysed reaction is L-ornithine + NADPH + O2 = N(5)-hydroxy-L-ornithine + NADP(+) + H2O. It functions in the pathway siderophore biosynthesis; ornibactin biosynthesis. Functionally, catalyzes the conversion of L-ornithine to N(5)-hydroxyornithine, the first step in the biosynthesis of all hydroxamate-containing siderophores, such as ornibactin. This is L-ornithine N(5)-monooxygenase from Burkholderia cepacia (Pseudomonas cepacia).